The chain runs to 530 residues: UDP-glucuronosyltransferase 1A8 (530 aa).

Positions 1 to 25 are cleaved as a signal peptide; that stretch reads MAPSGCPPSLPLCVCLFLASGFAQA. Residues asparagine 71, asparagine 292, and asparagine 430 are each glycosylated (N-linked (GlcNAc...) asparagine). A helical membrane pass occupies residues 488–504; that stretch reads VIGFLLAIVLTVVFIVY.

This sequence belongs to the UDP-glycosyltransferase family. Homodimers. Homooligomer. Interacts with UGT1A1, UGT1A3, UGT1A4, UGT1A6, UGT1A7, UGT1A8, UGT1A9 and UGT1A10 to form heterodimers.

The protein resides in the endoplasmic reticulum membrane. It carries out the reaction glucuronate acceptor + UDP-alpha-D-glucuronate = acceptor beta-D-glucuronoside + UDP + H(+). It catalyses the reaction 17beta-estradiol + UDP-alpha-D-glucuronate = 17beta-estradiol 3-O-(beta-D-glucuronate) + UDP + H(+). The enzyme catalyses 17alpha-estradiol + UDP-alpha-D-glucuronate = 17alpha-estradiol 3-O-(beta-D-glucuronate) + UDP + H(+). The catalysed reaction is estrone + UDP-alpha-D-glucuronate = estrone 3-O-(beta-D-glucuronate) + UDP + H(+). It carries out the reaction 16alpha,17alpha-estriol + UDP-alpha-D-glucuronate = 16alpha,17alpha-estriol 3-O-(beta-D-glucuronate) + UDP + H(+). It catalyses the reaction 2-hydroxy-17beta-estradiol + UDP-alpha-D-glucuronate = 2-hydroxy-17beta-estradiol 3-O-(beta-D-glucuronate) + UDP + H(+). The enzyme catalyses 2-hydroxy-17beta-estradiol + UDP-alpha-D-glucuronate = 17beta-estradiol 2-O-(beta-D-glucuronate) + UDP + H(+). The catalysed reaction is 2-hydroxyestrone + UDP-alpha-D-glucuronate = 2-hydroxyestrone 3-O-(beta-D-glucuronate) + UDP + H(+). It carries out the reaction 4-hydroxy-17beta-estradiol + UDP-alpha-D-glucuronate = 4-hydroxy-17beta-estradiol 3-O-(beta-D-glucuronate) + UDP + H(+). It catalyses the reaction 4-hydroxy-17beta-estradiol + UDP-alpha-D-glucuronate = 17beta-estradiol 4-O-(beta-D-glucuronate) + UDP + H(+). The enzyme catalyses 4-hydroxyestrone + UDP-alpha-D-glucuronate = 4-hydroxyestrone 3-O-(beta-D-glucuronate) + UDP + H(+). The catalysed reaction is 4-hydroxyestrone + UDP-alpha-D-glucuronate = estrone 4-O-(beta-D-glucuronate) + UDP + H(+). It carries out the reaction 2-methoxy-17beta-estradiol + UDP-alpha-D-glucuronate = 2-methoxy-17beta-estradiol 3-O-(beta-D-glucuronate) + UDP + H(+). It catalyses the reaction 2-methoxyestrone + UDP-alpha-D-glucuronate = 2-methoxyestrone 3-O-(beta-D-glucuronate) + UDP + H(+). The enzyme catalyses 4-methoxy-17beta-estradiol + UDP-alpha-D-glucuronate = 4-methoxy-17beta-estradiol 3-O-(beta-D-glucuronate) + UDP + H(+). The catalysed reaction is 4-methoxyestrone + UDP-alpha-D-glucuronate = 4-methoxyestrone 3-O-(beta-D-glucuronate) + UDP + H(+). It carries out the reaction 17beta-hydroxy-5alpha-androstan-3-one + UDP-alpha-D-glucuronate = 5alpha-dihydrotestosterone 17-O-(beta-D-glucuronate) + UDP + H(+). It catalyses the reaction 5alpha-dihydrotestosterone 17-O-(beta-D-glucuronate) + UDP-alpha-D-glucuronate = 5alpha-dihydrotestosterone 17-O-[beta-D-glucuronosyl-(1-&gt;2)-glucuronate] + UDP + H(+). The enzyme catalyses prunetin + UDP-alpha-D-glucuronate = prunetin-4'-O-beta-D-glucuronide + UDP. The catalysed reaction is prunetin + UDP-alpha-D-glucuronate = prunetin-5-O-beta-D-glucuronide + UDP. It carries out the reaction (E)-ferulate + UDP-alpha-D-glucuronate = (E)-4-O-(beta-D-glucuronosyl)-ferulate + UDP + H(+). It catalyses the reaction (E)-ferulate + UDP-alpha-D-glucuronate = (E)-ferulic acid beta-D-glucuronate ester + UDP. The enzyme catalyses candesartan + UDP-alpha-D-glucuronate = candesartan O-beta-D-glucuronoside + UDP. The catalysed reaction is mycophenolate + UDP-alpha-D-glucuronate = mycophenolate 7-O-beta-D-glucuronide + UDP + H(+). UDP-glucuronosyltransferase (UGT) that catalyzes phase II biotransformation reactions in which lipophilic substrates are conjugated with glucuronic acid to increase the metabolite's water solubility, thereby facilitating excretion into either the urine or bile. Essential for the elimination and detoxification of drugs, xenobiotics and endogenous compounds. Catalyzes the glucuronidation of endogenous steroid hormones such as androgens and estrogens. Produces dihydrotestosterone (DHT) diglucuronide from the DHT after two subsequent glucoronidation steps. Involved in the glucuronidation of the phytochemical ferulic acid at the phenolic or the carboxylic acid group. Also catalyzes the glucuronidation of the isoflavones genistein, daidzein, glycitein, formononetin, biochanin A and prunetin, which are phytoestrogens with anticancer and cardiovascular properties. Involved in the glucuronidation of the AGTR1 angiotensin receptor antagonist caderastan, a drug which can inhibit the effect of angiotensin II. Also metabolizes mycophenolate, an immunosuppressive agent. This chain is UDP-glucuronosyltransferase 1A8, found in Rattus norvegicus (Rat).